Here is a 177-residue protein sequence, read N- to C-terminus: MSTMTTIARPYAKAAFDFAVEKNELNQWVQMLTFCSEVTKNKDMAQLLDGAVAPEKLAEIFISICGEQLNEFGQNLIHIMAENGRLKVLPDVLDQYILLQHEFEKVIDAEIISAIELTEQQKADIGAKLEARLERKVKLNCSVDEALLAGVIIRAGDLVIDNSVRGRLSRLSETLQS.

This sequence belongs to the ATPase delta chain family. As to quaternary structure, F-type ATPases have 2 components, F(1) - the catalytic core - and F(0) - the membrane proton channel. F(1) has five subunits: alpha(3), beta(3), gamma(1), delta(1), epsilon(1). F(0) has three main subunits: a(1), b(2) and c(10-14). The alpha and beta chains form an alternating ring which encloses part of the gamma chain. F(1) is attached to F(0) by a central stalk formed by the gamma and epsilon chains, while a peripheral stalk is formed by the delta and b chains.

Its subcellular location is the cell inner membrane. Functionally, f(1)F(0) ATP synthase produces ATP from ADP in the presence of a proton or sodium gradient. F-type ATPases consist of two structural domains, F(1) containing the extramembraneous catalytic core and F(0) containing the membrane proton channel, linked together by a central stalk and a peripheral stalk. During catalysis, ATP synthesis in the catalytic domain of F(1) is coupled via a rotary mechanism of the central stalk subunits to proton translocation. This protein is part of the stalk that links CF(0) to CF(1). It either transmits conformational changes from CF(0) to CF(1) or is implicated in proton conduction. The sequence is that of ATP synthase subunit delta from Aliivibrio salmonicida (strain LFI1238) (Vibrio salmonicida (strain LFI1238)).